The primary structure comprises 61 residues: Large ribosomal subunit protein uL30 (61 aa).

Belongs to the universal ribosomal protein uL30 family. Part of the 50S ribosomal subunit.

This chain is Large ribosomal subunit protein uL30, found in Neisseria gonorrhoeae (strain ATCC 700825 / FA 1090).